A 466-amino-acid polypeptide reads, in one-letter code: Ferrochelatase-1, chloroplastic/mitochondrial (466 aa).

The span at 1-11 shows a compositional bias: polar residues; sequence MQATALSSGFN. The segment at 1 to 23 is disordered; the sequence is MQATALSSGFNPLTKRKDHRFPR. A chloroplast and mitochondrion-targeting transit peptide spans 1-35; that stretch reads MQATALSSGFNPLTKRKDHRFPRSCSQRNSLSLIQ.

Belongs to the ferrochelatase family. As to expression, expressed in roots, leaves, stems and flowers. Present in both leaves and roots.

Its subcellular location is the plastid. It localises to the chloroplast membrane. The protein resides in the chloroplast thylakoid membrane. It is found in the mitochondrion. The enzyme catalyses heme b + 2 H(+) = protoporphyrin IX + Fe(2+). Its pathway is porphyrin-containing compound metabolism; protoheme biosynthesis; protoheme from protoporphyrin-IX: step 1/1. Functionally, catalyzes the last step of heme biosynthesis by inserting ferrous iron into protoporphyrin IX to produce protoheme. Produces heme for photosynthetic cytochromes, but does not seem to be involved in stress responses. May be involved in wound-induced supply of heme to defensive hemoproteins outside plastids. Regulates the expression of photosynthesis-associated nuclear genes in undeveloped chloroplasts through production of heme. The protein is Ferrochelatase-1, chloroplastic/mitochondrial of Arabidopsis thaliana (Mouse-ear cress).